We begin with the raw amino-acid sequence, 204 residues long: Leucyl/phenylalanyl-tRNA--protein transferase (204 aa).

It belongs to the L/F-transferase family.

It localises to the cytoplasm. It carries out the reaction N-terminal L-lysyl-[protein] + L-leucyl-tRNA(Leu) = N-terminal L-leucyl-L-lysyl-[protein] + tRNA(Leu) + H(+). The enzyme catalyses N-terminal L-arginyl-[protein] + L-leucyl-tRNA(Leu) = N-terminal L-leucyl-L-arginyl-[protein] + tRNA(Leu) + H(+). It catalyses the reaction L-phenylalanyl-tRNA(Phe) + an N-terminal L-alpha-aminoacyl-[protein] = an N-terminal L-phenylalanyl-L-alpha-aminoacyl-[protein] + tRNA(Phe). Its function is as follows. Functions in the N-end rule pathway of protein degradation where it conjugates Leu, Phe and, less efficiently, Met from aminoacyl-tRNAs to the N-termini of proteins containing an N-terminal arginine or lysine. The sequence is that of Leucyl/phenylalanyl-tRNA--protein transferase from Brucella melitensis biotype 2 (strain ATCC 23457).